Here is a 485-residue protein sequence, read N- to C-terminus: NADH-quinone oxidoreductase subunit N (485 aa).

14 consecutive transmembrane segments (helical) span residues 8–28, 35–55, 71–91, 105–125, 127–147, 159–179, 203–223, 235–255, 271–291, 297–317, 326–346, 373–393, 408–430, and 455–475; these read LIALLPLLIVGLTVVVVMLSI, FLNATLSVIGLNAALVSLWFV, GFAMLYTGLVLLASLATCTFA, FYLLVLIAALGGILLANANHL, SLFLGIELISLPLFGLVGYAF, YTILSAAASSFLLFGMALVYA, LLAGFGLMIVGLGFKLSLVPF, PAPVSTFLATASKIAIFGVVM, VVLAIIAFASIIFGNLMALSQ, LLGYSSISHLGYLLVALIALQ, VGVYLAGYLFSSLGAFGVVSL, AAVMTVMMLSLAGIPMTLGFI, WWLVGAVVVGSAIGLYYYLRVAV, and IVVLISALLVLVLGVWPQPLI.

Belongs to the complex I subunit 2 family. NDH-1 is composed of 13 different subunits. Subunits NuoA, H, J, K, L, M, N constitute the membrane sector of the complex.

Its subcellular location is the cell inner membrane. It catalyses the reaction a quinone + NADH + 5 H(+)(in) = a quinol + NAD(+) + 4 H(+)(out). NDH-1 shuttles electrons from NADH, via FMN and iron-sulfur (Fe-S) centers, to quinones in the respiratory chain. The immediate electron acceptor for the enzyme in this species is believed to be ubiquinone. Couples the redox reaction to proton translocation (for every two electrons transferred, four hydrogen ions are translocated across the cytoplasmic membrane), and thus conserves the redox energy in a proton gradient. The sequence is that of NADH-quinone oxidoreductase subunit N from Escherichia coli (strain ATCC 8739 / DSM 1576 / NBRC 3972 / NCIMB 8545 / WDCM 00012 / Crooks).